The chain runs to 84 residues: Small ribosomal subunit protein bS20 (84 aa).

The segment at 1–32 (MPRHESAKKRMRQNEKRQKRNKSQKSRVRTKI) is disordered.

Belongs to the bacterial ribosomal protein bS20 family.

Its function is as follows. Binds directly to 16S ribosomal RNA. This is Small ribosomal subunit protein bS20 from Salinibacter ruber (strain DSM 13855 / M31).